A 260-amino-acid polypeptide reads, in one-letter code: Snake venom serine protease homolog (260 aa).

A signal peptide spans 1–18 (MVLIRVLANLLILQLSYA). A propeptide spanning residues 19-24 (QKASEL) is cleaved from the precursor. The 227-residue stretch at 25–251 (IIGGDECNIN…YTEWIRSIIA (227 aa)) folds into the Peptidase S1 domain. Disulfide bonds link Cys-31-Cys-165, Cys-52-Cys-68, Cys-100-Cys-258, Cys-144-Cys-212, Cys-176-Cys-191, and Cys-202-Cys-227. A glycan (N-linked (GlcNAc...) asparagine) is linked at Asn-83.

Belongs to the peptidase S1 family. Snake venom subfamily. As to expression, expressed by the venom gland.

The protein localises to the secreted. In terms of biological role, snake venom serine protease homolog that may act in the hemostasis system of the prey. The polypeptide is Snake venom serine protease homolog (Bothrops jararacussu (Jararacussu)).